A 390-amino-acid polypeptide reads, in one-letter code: MRYITAGESHGPQLTTIIEGVPAGLPLVADDINEELARRQKGYGRGRRMQIETDQVQIVSGVRHGETLGSPIALVVENRDFAHWTKIMGAEPLTEQEEKEMKRKVTKPRPGHADLNGAIKYGHRDMRNVLERSSARETTVRVAAGAVAKKVLAELGIAVAGHVIEIGGVQAKETTYRSIEELKSITEASPVRCLDEEAGNQMIKAIDDAKSNGDSIGGIVEVIVEGMPIGVGSYVHYDRKLDAKLAAAMMSINAFKGVEIGIGFEAAHRPGSEVHDEIVWNEEHGYTRRTNNAGGLEGGMTTGMPIVVRGVMKPIPTLYKPLQSVDIDTKEPFTASIERSDSCAVPAASVVAEAVVAWELATAVIEQFGLDRMDLIRENIERHNEYARGF.

NADP(+) is bound by residues Arg39 and Arg45. Residues 95-117 form a disordered region; the sequence is EQEEKEMKRKVTKPRPGHADLNG. FMN-binding positions include 132 to 134, 253 to 254, Gly298, 313 to 317, and Arg339; these read RSS, NA, and KPIPT.

The protein belongs to the chorismate synthase family. In terms of assembly, homotetramer. Requires FMNH2 as cofactor.

It carries out the reaction 5-O-(1-carboxyvinyl)-3-phosphoshikimate = chorismate + phosphate. The protein operates within metabolic intermediate biosynthesis; chorismate biosynthesis; chorismate from D-erythrose 4-phosphate and phosphoenolpyruvate: step 7/7. In terms of biological role, catalyzes the anti-1,4-elimination of the C-3 phosphate and the C-6 proR hydrogen from 5-enolpyruvylshikimate-3-phosphate (EPSP) to yield chorismate, which is the branch point compound that serves as the starting substrate for the three terminal pathways of aromatic amino acid biosynthesis. This reaction introduces a second double bond into the aromatic ring system. This Bacillus cereus (strain ATCC 10987 / NRS 248) protein is Chorismate synthase 1.